The following is a 199-amino-acid chain: Venom allergen 5 (199 aa).

Cystine bridges form between cysteine 21-cysteine 87 and cysteine 167-cysteine 184. The SCP domain occupies 38–186 (LKVHNDERQK…FYKCYLACNY (149 aa)). Residues 47-67 (KVKAGQETRGNPGPQPAASNM) are disordered.

The protein belongs to the CRISP family. Venom allergen 5-like subfamily. As to expression, expressed by the venom gland.

The protein localises to the secreted. In Brachyponera chinensis (Asian needle ant), this protein is Venom allergen 5.